The chain runs to 342 residues: GTPase Obg (342 aa).

Positions Met-1–Leu-159 constitute an Obg domain. The OBG-type G domain occupies Ala-160 to Lys-332. GTP-binding positions include Gly-166–Ser-173, Phe-191–Thr-195, Asp-214–Gly-217, Asn-284–Asp-287, and Ser-313–Ala-315. 2 residues coordinate Mg(2+): Ser-173 and Thr-193.

The protein belongs to the TRAFAC class OBG-HflX-like GTPase superfamily. OBG GTPase family. Monomer. The cofactor is Mg(2+).

It localises to the cytoplasm. Functionally, an essential GTPase which binds GTP, GDP and possibly (p)ppGpp with moderate affinity, with high nucleotide exchange rates and a fairly low GTP hydrolysis rate. Plays a role in control of the cell cycle, stress response, ribosome biogenesis and in those bacteria that undergo differentiation, in morphogenesis control. The sequence is that of GTPase Obg from Syntrophus aciditrophicus (strain SB).